Here is a 647-residue protein sequence, read N- to C-terminus: Threonine--tRNA ligase (647 aa).

The TGS domain occupies 1-61 (MIKITFPDGA…TEDGSIEIVT (61 aa)). Positions 242–540 (DHRKLGKELD…LIENYKGAFP (299 aa)) are catalytic. Cysteine 336, histidine 387, and histidine 517 together coordinate Zn(2+).

It belongs to the class-II aminoacyl-tRNA synthetase family. Homodimer. Zn(2+) is required as a cofactor.

Its subcellular location is the cytoplasm. It carries out the reaction tRNA(Thr) + L-threonine + ATP = L-threonyl-tRNA(Thr) + AMP + diphosphate + H(+). Functionally, catalyzes the attachment of threonine to tRNA(Thr) in a two-step reaction: L-threonine is first activated by ATP to form Thr-AMP and then transferred to the acceptor end of tRNA(Thr). Also edits incorrectly charged L-seryl-tRNA(Thr). The protein is Threonine--tRNA ligase of Streptococcus gordonii (strain Challis / ATCC 35105 / BCRC 15272 / CH1 / DL1 / V288).